We begin with the raw amino-acid sequence, 220 residues long: Small ribosomal subunit protein uS3 (220 aa).

The KH type-2 domain occupies 24-93 (IKEFLEYRLS…NPQIDVIDVS (70 aa)).

Belongs to the universal ribosomal protein uS3 family. As to quaternary structure, part of the 30S ribosomal subunit.

Functionally, binds the lower part of the 30S subunit head. The chain is Small ribosomal subunit protein uS3 from Pyrobaculum arsenaticum (strain DSM 13514 / JCM 11321 / PZ6).